The sequence spans 554 residues: Acetyl-S-ACP:malonate ACP transferase (554 aa).

It is found in the cytoplasm. The enzyme catalyses acetyl-[ACP] + malonate = malonyl-[ACP] + acetate. In terms of biological role, alpha subunit of the biotin-independent and biotin-dependent malonate decarboxylase multienzyme complex (EC 4.1.1.88 and EC 7.2.4.4, respectively). Acts as an acyl-carrier protein (ACP) transferase component. This first step in malonate decarboxylation involves the exchange of an acetyl thioester residue bound to the activated ACP subunit for a malonyl thioester residue. Has a weak activity with acetyl-CoA as substrate. This chain is Acetyl-S-ACP:malonate ACP transferase (madA), found in Malonomonas rubra.